Reading from the N-terminus, the 627-residue chain is Druantia protein DruC (627 aa).

The protein localises to the cytoplasm. Its function is as follows. Component of antiviral defense system Druantia type I, composed of DruA, DruB, DruC, DruD and DruE. Expression of Druantia in E.coli (strain MG1655) confers resistance to phage lambda, SECphi18, SECphi27 and T4. This Escherichia coli (strain UMEA 4076-1) protein is Druantia protein DruC.